The following is a 278-amino-acid chain: DegV domain-containing protein YejH (278 aa).

The DegV domain occupies 3-277; sequence IKIVTDSSIT…PGAWAIMIDY (275 aa). Hexadecanoate is bound by residues Thr60 and Ser92.

In terms of biological role, may bind long-chain fatty acids, such as palmitate, and may play a role in lipid transport or fatty acid metabolism. The sequence is that of DegV domain-containing protein YejH (yejH) from Lactococcus lactis subsp. lactis (strain IL1403) (Streptococcus lactis).